We begin with the raw amino-acid sequence, 504 residues long: Peptidyl-prolyl cis-trans isomerase CYP57 (504 aa).

Serine 2 is subject to N-acetylserine. A PPIase cyclophilin-type domain is found at 16-167; the sequence is IVNTTHGPID…DPAPKILSVE (152 aa). Residues 204–274 are a coiled coil; the sequence is NLLSFGEEAE…AKKEAAQKDK (71 aa). Composition is skewed to basic and acidic residues over residues 237 to 275, 344 to 354, and 364 to 374; these read RLLK…KDKS, EDEKPRMEKLS, and AKAEHMEKGDT. Disordered regions lie at residues 237–374, 416–441, and 482–504; these read RLLK…KGDT, AKPF…KEED, and EKFN…KSLA. Positions 416-434 are enriched in polar residues; sequence AKPFTSSNEPVVLTSSSEP. Basic and acidic residues predominate over residues 494 to 504; sequence REREWSGKSLA.

It belongs to the cyclophilin-type PPIase family. As to expression, ubiquitous.

The protein localises to the nucleus. Its subcellular location is the cytoplasm. It catalyses the reaction [protein]-peptidylproline (omega=180) = [protein]-peptidylproline (omega=0). PPIases accelerate the folding of proteins. It catalyzes the cis-trans isomerization of proline imidic peptide bonds in oligopeptides. Involved in plant response to pathogen infection by increasing PAD4 expression in absence of EDS1 up-regulation. The sequence is that of Peptidyl-prolyl cis-trans isomerase CYP57 (CYP57) from Arabidopsis thaliana (Mouse-ear cress).